The chain runs to 249 residues: Probable transcriptional regulatory protein Tfu_2096 (249 aa).

It belongs to the TACO1 family.

The protein resides in the cytoplasm. The chain is Probable transcriptional regulatory protein Tfu_2096 from Thermobifida fusca (strain YX).